Reading from the N-terminus, the 187-residue chain is Signal peptidase complex catalytic subunit SEC11 (187 aa).

The Cytoplasmic segment spans residues 1–14 (MLSSLSPYMANPRN). A helical; Signal-anchor for type II membrane protein transmembrane segment spans residues 15-33 (TLSQVLNFGLVLSSAFMVW). Topologically, residues 34-187 (KTLSVITNST…MGLMVMLQRE (154 aa)) are lumenal. Residue N41 is glycosylated (N-linked (GlcNAc...) asparagine). Residues S53 and H92 each act as charge relay system in the active site. N125 carries N-linked (GlcNAc...) asparagine glycosylation. Catalysis depends on D129, which acts as the Charge relay system. The C-terminal short (CTS) helix stretch occupies residues 173–184 (VLLGFMGLMVML).

Belongs to the peptidase S26B family. As to quaternary structure, component of the signal peptidase complex (SPC) composed of a catalytic subunit SEC11 and three accessory subunits SPC1, SPC2 and SPC3. The complex induces a local thinning of the ER membrane which is used to measure the length of the signal peptide (SP) h-region of protein substrates. This ensures the selectivity of the complex towards h-regions shorter than 18-20 amino acids. SPC associates with the translocon complex.

The protein resides in the endoplasmic reticulum membrane. It carries out the reaction Cleavage of hydrophobic, N-terminal signal or leader sequences from secreted and periplasmic proteins.. Catalytic component of the signal peptidase complex (SPC) which catalyzes the cleavage of N-terminal signal sequences from nascent proteins as they are translocated into the lumen of the endoplasmic reticulum. Specifically cleaves N-terminal signal peptides that contain a hydrophobic alpha-helix (h-region) shorter than 18-20 amino acids. In Ajellomyces capsulatus (strain H88) (Darling's disease fungus), this protein is Signal peptidase complex catalytic subunit SEC11 (SEC11).